The following is a 426-amino-acid chain: 3-phosphoshikimate 1-carboxyvinyltransferase (426 aa).

K22, S23, and R27 together coordinate 3-phosphoshikimate. K22 provides a ligand contact to phosphoenolpyruvate. Positions 96 and 124 each coordinate phosphoenolpyruvate. 3-phosphoshikimate contacts are provided by S170, S171, Q172, S198, D314, N337, and K341. Q172 provides a ligand contact to phosphoenolpyruvate. Catalysis depends on D314, which acts as the Proton acceptor. R345, R387, and K412 together coordinate phosphoenolpyruvate.

It belongs to the EPSP synthase family. In terms of assembly, monomer.

The protein resides in the cytoplasm. The catalysed reaction is 3-phosphoshikimate + phosphoenolpyruvate = 5-O-(1-carboxyvinyl)-3-phosphoshikimate + phosphate. It functions in the pathway metabolic intermediate biosynthesis; chorismate biosynthesis; chorismate from D-erythrose 4-phosphate and phosphoenolpyruvate: step 6/7. Functionally, catalyzes the transfer of the enolpyruvyl moiety of phosphoenolpyruvate (PEP) to the 5-hydroxyl of shikimate-3-phosphate (S3P) to produce enolpyruvyl shikimate-3-phosphate and inorganic phosphate. This chain is 3-phosphoshikimate 1-carboxyvinyltransferase, found in Shewanella sp. (strain W3-18-1).